We begin with the raw amino-acid sequence, 463 residues long: Interferon-inducible GTPase 5 (463 aa).

Positions 52-234 constitute an IRG-type G domain; that stretch reads TRLEVGVTGE…PMLVTTWEHD (183 aa). GTP is bound by residues 61–68, 86–90, 168–170, and 215–217; these read ESGAGKSS, TGVVE, KVD, and SNL. Residues Ser-246 and Ser-303 each carry the phosphoserine modification. The segment at 409–438 is disordered; the sequence is QGEVSLEAAGDNAVEKRSSGEGTSEEAPLS.

It belongs to the TRAFAC class dynamin-like GTPase superfamily. IRG family.

The protein resides in the cell projection. The protein localises to the cilium. It is found in the flagellum. Its subcellular location is the lipid droplet. It catalyses the reaction GTP + H2O = GDP + phosphate + H(+). Required for sperm motility and therefore male fertility, via positive regulation of spermatozoa fibrous sheath formation. The polypeptide is Interferon-inducible GTPase 5 (Irgc) (Rattus norvegicus (Rat)).